The sequence spans 437 residues: Serine--tRNA ligase (437 aa).

240–242 provides a ligand contact to L-serine; sequence TAE. An ATP-binding site is contributed by 271-273; the sequence is RAE. Glu294 provides a ligand contact to L-serine. 358-361 contributes to the ATP binding site; sequence EISS. L-serine is bound at residue Ser394.

It belongs to the class-II aminoacyl-tRNA synthetase family. Type-1 seryl-tRNA synthetase subfamily. As to quaternary structure, homodimer. The tRNA molecule binds across the dimer.

The protein localises to the cytoplasm. The enzyme catalyses tRNA(Ser) + L-serine + ATP = L-seryl-tRNA(Ser) + AMP + diphosphate + H(+). The catalysed reaction is tRNA(Sec) + L-serine + ATP = L-seryl-tRNA(Sec) + AMP + diphosphate + H(+). Its pathway is aminoacyl-tRNA biosynthesis; selenocysteinyl-tRNA(Sec) biosynthesis; L-seryl-tRNA(Sec) from L-serine and tRNA(Sec): step 1/1. Its function is as follows. Catalyzes the attachment of serine to tRNA(Ser). Is also able to aminoacylate tRNA(Sec) with serine, to form the misacylated tRNA L-seryl-tRNA(Sec), which will be further converted into selenocysteinyl-tRNA(Sec). This chain is Serine--tRNA ligase, found in Methylobacterium nodulans (strain LMG 21967 / CNCM I-2342 / ORS 2060).